The chain runs to 121 residues: UPF0102 protein Syncc9902_1284 (121 aa).

Belongs to the UPF0102 family.

This Synechococcus sp. (strain CC9902) protein is UPF0102 protein Syncc9902_1284.